The sequence spans 110 residues: G antigen 2E (110 aa).

Residues 1–110 form a disordered region; sequence MSWRGRSTYY…NPEEVKTPEE (110 aa). Composition is skewed to acidic residues over residues 32 to 45 and 87 to 96; these read FSDE…EEGE and ECEDGPDGQE.

This sequence belongs to the GAGE family.

This Homo sapiens (Human) protein is G antigen 2E (GAGE2E).